Consider the following 120-residue polypeptide: Holo-[acyl-carrier-protein] synthase (120 aa).

Positions 8 and 58 each coordinate Mg(2+).

The protein belongs to the P-Pant transferase superfamily. AcpS family. Mg(2+) serves as cofactor.

It is found in the cytoplasm. The enzyme catalyses apo-[ACP] + CoA = holo-[ACP] + adenosine 3',5'-bisphosphate + H(+). Transfers the 4'-phosphopantetheine moiety from coenzyme A to a Ser of acyl-carrier-protein. This Streptococcus pneumoniae (strain Hungary19A-6) protein is Holo-[acyl-carrier-protein] synthase.